A 673-amino-acid chain; its full sequence is Probable boron transporter 7 (673 aa).

Residues 1 to 35 (MEGVKFPFGGIINDFNGRRKCYKQDWLAAFNSGVR) lie on the Cytoplasmic side of the membrane. Residues 36 to 56 (ILAPTLYIFIASALPVIAFGE) traverse the membrane as a helical segment. At 57–75 (QLSRETDRSLGIAESLAST) the chain is on the extracellular side. A helical transmembrane segment spans residues 76–96 (ALCGIIHSVFGGQPLLIVGVA). Residues 97–121 (EPTIIMYTYLHSFSKSRPELGQKLY) are Cytoplasmic-facing. A helical membrane pass occupies residues 122–142 (LAWAGWVCVWTAVLLMLLAML). The Extracellular portion of the chain corresponds to 143 to 160 (NACNIISRFTRIAGELFG). The chain crosses the membrane as a helical span at residues 161–181 (MLITVLFIQEAVKGLIGEFLV). At 182–197 (PKSDDPSLEVYQFQWR) the chain is on the cytoplasmic side. The chain crosses the membrane as a helical span at residues 198–218 (YTNGLLAVIFSFGLLYTALKS). Topologically, residues 219–233 (RRARSWKYGFRWMRG) are extracellular. A helical transmembrane segment spans residues 234–254 (FIGDYGTLLMLVLWSAFSYTV). The Cytoplasmic segment spans residues 255 to 289 (PRNLPEGVPRRLELPLPWASESLYHWTVVKDMAKV). Residues 290-310 (PPLYILAAFIPAIMIAGLYFF) form a helical membrane-spanning segment. Topologically, residues 311–330 (DHCVSAQMAQQKEFNLKNPT) are extracellular. The helical transmembrane segment at 331 to 351 (AYHYDIFILGIMTLICGLLGL) threads the bilayer. The Cytoplasmic portion of the chain corresponds to 352 to 468 (PPSNGVIPQS…EQRVSNLLQS (117 aa)). Residues 469-489 (VLVGLLILAVPVLRMIPTSVL) form a helical membrane-spanning segment. The Extracellular portion of the chain corresponds to 490–556 (WGYFTYMAVD…QLLYFLICYG (67 aa)). Residues 557-577 (VTWIPVGGILFPLPFFILIAL) form a helical membrane-spanning segment. Residues 578–673 (RQYILQRLFD…SQMVKIYNHS (96 aa)) are Cytoplasmic-facing.

Belongs to the anion exchanger (TC 2.A.31.3) family.

It localises to the membrane. Functionally, putative boron transporter. Boron is essential for maintaining the integrity of plants cell walls. This chain is Probable boron transporter 7 (BOR7), found in Arabidopsis thaliana (Mouse-ear cress).